A 522-amino-acid chain; its full sequence is Glutamate--cysteine ligase, chloroplastic (522 aa).

2 disulfide bridges follow: cysteine 186-cysteine 406 and cysteine 349-cysteine 364.

This sequence belongs to the carboxylate-amine ligase family. Glutamate--cysteine ligase type 2 subfamily. Homodimer or monomer when oxidized or reduced, respectively. Post-translationally, the Cys-186-Cys-406 disulfide bridge is known to modulate the enzyme activity according to the redox status. The oxidized form constitutes the active enzyme. In terms of tissue distribution, abundant in leaves and roots. Expressed to a high level in leaf trichomes of mature plant.

Its subcellular location is the plastid. The protein localises to the chloroplast. The enzyme catalyses L-cysteine + L-glutamate + ATP = gamma-L-glutamyl-L-cysteine + ADP + phosphate + H(+). It functions in the pathway sulfur metabolism; glutathione biosynthesis; glutathione from L-cysteine and L-glutamate: step 1/2. Its activity is regulated as follows. Feedback inhibition by glutathione. Inhibited by buthionine sulfoximine and cystamine. Functionally, seems to play an important role in controlling the expression of resistance responses like the regulation of salicylic acid (SA) and phytoalexin (camalexin) production. Involved in resistance to fungal and bacterial pathogens. Required for the regulation of cell proliferation in root apical meristems through the GSH-dependent developmental pathway. Also participates in the detoxification process, the antioxidant response and is essential for embryo development and proper seed maturation. This is Glutamate--cysteine ligase, chloroplastic (GSH1) from Arabidopsis thaliana (Mouse-ear cress).